A 343-amino-acid polypeptide reads, in one-letter code: Mitochondrial distribution and morphology protein 34 (343 aa).

The 196-residue stretch at 1–196 folds into the SMP-LTD domain; the sequence is MSFVFPSWST…LPGIIHRLSQ (196 aa). Disordered regions lie at residues 227–255 and 300–325; these read EVEE…IGPG and GAGT…KAKR. Residues 306 to 317 are compositionally biased toward low complexity; it reads SGRASLASSSVG.

Belongs to the MDM34 family. As to quaternary structure, component of the ER-mitochondria encounter structure (ERMES) or MDM complex, composed of MMM1, MDM10, MDM12 and MDM34.

It localises to the mitochondrion outer membrane. Its function is as follows. Component of the ERMES/MDM complex, which serves as a molecular tether to connect the endoplasmic reticulum (ER) and mitochondria. Components of this complex are involved in the control of mitochondrial shape and protein biogenesis, and function in nonvesicular lipid trafficking between the ER and mitochondria. MDM34 is required for the interaction of the ER-resident membrane protein MMM1 and the outer mitochondrial membrane-resident beta-barrel protein MDM10. The polypeptide is Mitochondrial distribution and morphology protein 34 (Cryptococcus neoformans var. neoformans serotype D (strain B-3501A) (Filobasidiella neoformans)).